The chain runs to 127 residues: Large ribosomal subunit protein bL12 (127 aa).

Residues 93–127 (LVDEAPNPVSEGVSREEADDLKAQIEDAGGEVELQ) form a disordered region. The span at 105–117 (VSREEADDLKAQI) shows a compositional bias: basic and acidic residues.

The protein belongs to the bacterial ribosomal protein bL12 family. In terms of assembly, homodimer. Part of the ribosomal stalk of the 50S ribosomal subunit. Forms a multimeric L10(L12)X complex, where L10 forms an elongated spine to which 2 to 4 L12 dimers bind in a sequential fashion. Binds GTP-bound translation factors.

Functionally, forms part of the ribosomal stalk which helps the ribosome interact with GTP-bound translation factors. Is thus essential for accurate translation. The sequence is that of Large ribosomal subunit protein bL12 from Salinibacter ruber (strain DSM 13855 / M31).